The chain runs to 77 residues: Homeodomain-only protein (77 aa).

The segment at residues 7–65 (AALGVRLTEDQVKVLEENFTKVSKHPDETTLMLIAAECGLSEEQTAVWFRMRNAQWRKA) is a DNA-binding region (homeobox; degenerate).

The protein resides in the nucleus. It is found in the cytoplasm. Functionally, atypical homeodomain protein which does not bind DNA and is required to modulate cardiac growth and development. May act via an interaction with SRF, leading to modulate the expression of SRF-dependent cardiac-specific genes and cardiac development. May act as a co-chaperone for HSPA1A and HSPA1B chaperone proteins and assist in chaperone-mediated protein refolding. This Danio rerio (Zebrafish) protein is Homeodomain-only protein (hopx).